The following is a 422-amino-acid chain: MDKLSQLPEALLVRILSLLSAKDVVSTMVLSKRWQFLWMLVPKLIYDDSYQAIEYGSFSRFVDRSFTLHDAQVLDTLHFKLGKTSCGTGDIRVWIKTAEKSCLRELIIEIDKSNSDNSSVVLPRSLYTCCRMLVTLKLNNAVLVDATSSFSFPSLKTLSLVSMKFPGDELIKMLLSNCPVLEDLVVKRCPYDNVTTFTVRVSSLKCLVLHETELASINADCGFVIDTPSLECLDIEDGRGGFCVIENNMTKVVKANVCNSYVHTQQLMGSISSVKRLYVCIPSSKDAYPVGSVFHCLVRLTICTCETEWLNLLMCVLRDSPKLRELKLVKNHVYRSHQPRPCWNEPSAVPECLLTSLETLEWVKYEGTEEEKEVAAFILRSGSCLKKVTISSKSTDINKKFEMLKELSLLFRRSPTCQIAFD.

The F-box domain maps to 1 to 53 (MDKLSQLPEALLVRILSLLSAKDVVSTMVLSKRWQFLWMLVPKLIYDDSYQAI). Positions 342–392 (CWNEPSAVPECLLTSLETLEWVKYEGTEEEKEVAAFILRSGSCLKKVTISS) constitute an FBD domain.

The chain is Probable FBD-associated F-box protein At1g32375 from Arabidopsis thaliana (Mouse-ear cress).